Reading from the N-terminus, the 224-residue chain is Thiamine-phosphate synthase (224 aa).

4-amino-2-methyl-5-(diphosphooxymethyl)pyrimidine-binding positions include 44-48 (QFREK) and N79. Positions 80 and 99 each coordinate Mg(2+). S117 contributes to the 4-amino-2-methyl-5-(diphosphooxymethyl)pyrimidine binding site. Residue 143 to 145 (TST) coordinates 2-[(2R,5Z)-2-carboxy-4-methylthiazol-5(2H)-ylidene]ethyl phosphate. K146 contacts 4-amino-2-methyl-5-(diphosphooxymethyl)pyrimidine. Residues G175 and 195 to 196 (IS) contribute to the 2-[(2R,5Z)-2-carboxy-4-methylthiazol-5(2H)-ylidene]ethyl phosphate site.

It belongs to the thiamine-phosphate synthase family. Mg(2+) serves as cofactor.

The catalysed reaction is 2-[(2R,5Z)-2-carboxy-4-methylthiazol-5(2H)-ylidene]ethyl phosphate + 4-amino-2-methyl-5-(diphosphooxymethyl)pyrimidine + 2 H(+) = thiamine phosphate + CO2 + diphosphate. It catalyses the reaction 2-(2-carboxy-4-methylthiazol-5-yl)ethyl phosphate + 4-amino-2-methyl-5-(diphosphooxymethyl)pyrimidine + 2 H(+) = thiamine phosphate + CO2 + diphosphate. It carries out the reaction 4-methyl-5-(2-phosphooxyethyl)-thiazole + 4-amino-2-methyl-5-(diphosphooxymethyl)pyrimidine + H(+) = thiamine phosphate + diphosphate. It participates in cofactor biosynthesis; thiamine diphosphate biosynthesis; thiamine phosphate from 4-amino-2-methyl-5-diphosphomethylpyrimidine and 4-methyl-5-(2-phosphoethyl)-thiazole: step 1/1. Condenses 4-methyl-5-(beta-hydroxyethyl)thiazole monophosphate (THZ-P) and 2-methyl-4-amino-5-hydroxymethyl pyrimidine pyrophosphate (HMP-PP) to form thiamine monophosphate (TMP). The protein is Thiamine-phosphate synthase of Bacillus cereus (strain ATCC 10987 / NRS 248).